The following is a 439-amino-acid chain: Ribosomal protein uS12 methylthiotransferase RimO (439 aa).

The 111-residue stretch at 4-114 folds into the MTTase N-terminal domain; it reads PKVGFVSLGC…VVRAVHGVAP (111 aa). [4Fe-4S] cluster contacts are provided by Cys-13, Cys-49, Cys-78, Cys-147, Cys-151, and Cys-154. The Radical SAM core domain maps to 133–370; it reads LTPRHYAYLK…MEHQQAISTA (238 aa). The region spanning 373-439 is the TRAM domain; the sequence is STRVGREIDV…EYDLWGERIA (67 aa).

This sequence belongs to the methylthiotransferase family. RimO subfamily. The cofactor is [4Fe-4S] cluster.

The protein resides in the cytoplasm. It carries out the reaction L-aspartate(89)-[ribosomal protein uS12]-hydrogen + (sulfur carrier)-SH + AH2 + 2 S-adenosyl-L-methionine = 3-methylsulfanyl-L-aspartate(89)-[ribosomal protein uS12]-hydrogen + (sulfur carrier)-H + 5'-deoxyadenosine + L-methionine + A + S-adenosyl-L-homocysteine + 2 H(+). Its function is as follows. Catalyzes the methylthiolation of an aspartic acid residue of ribosomal protein uS12. The polypeptide is Ribosomal protein uS12 methylthiotransferase RimO (Bordetella parapertussis (strain 12822 / ATCC BAA-587 / NCTC 13253)).